The following is a 483-amino-acid chain: Probable glycosyltransferase 4 (483 aa).

At 1 to 26 (MSKLQDRHGGEAAADVGRRARHQRLL) the chain is on the cytoplasmic side. Residues 27–47 (LSFPVFPIVLLLLAPCTIFFF) form a helical; Signal-anchor for type II membrane protein membrane-spanning segment. The Lumenal segment spans residues 48 to 483 (TSGDVPLPRI…KKTSRAARPM (436 aa)). The disordered stretch occupies residues 71 to 119 (AVAADTSPPPPSPPSSSPPPLSFPPPPPPPSSPPPPALPVVDDHSDTQR). Residues 77–108 (SPPPPSPPSSSPPPLSFPPPPPPPSSPPPPAL) show a composition bias toward pro residues. Asparagine 448 carries N-linked (GlcNAc...) asparagine glycosylation.

The protein belongs to the glycosyltransferase 34 family.

The protein localises to the golgi apparatus membrane. Functionally, probable glycosyltransferase that may be involved in the biosynthesis of xyloglucan. The sequence is that of Probable glycosyltransferase 4 from Oryza sativa subsp. indica (Rice).